The chain runs to 664 residues: Macoilin (664 aa).

A run of 4 helical transmembrane segments spans residues 28–48, 75–95, 120–140, and 154–174; these read TFLY…DFVL, AFSV…LLFI, VCLP…AIRF, and FAAH…KSYV. Positions 253-265 are enriched in basic and acidic residues; the sequence is REKGKEKDKDAKK. Residues 253 to 274 are disordered; sequence REKGKEKDKDAKKHNLGINNNN. A Phosphoserine modification is found at serine 305. Residues 320 to 348 show a composition bias toward polar residues; that stretch reads KNYKNASGVVNSSPRSHSATNGSIPSSSS. The tract at residues 320-375 is disordered; that stretch reads KNYKNASGVVNSSPRSHSATNGSIPSSSSKNEKKQKCTSKSPSTHKDLMENCIPNN. Residue asparagine 324 is glycosylated (N-linked (GlcNAc...) asparagine). Serine 332 carries the post-translational modification Phosphoserine. 2 N-linked (GlcNAc...) asparagine glycosylation sites follow: asparagine 340 and asparagine 452. Residues 630 to 664 form a disordered region; it reads TSPLSPVSPHYSSKFVETSPSGLDPNASVYQPLKK. 2 positions are modified to phosphoserine: serine 631 and serine 634. Asparagine 655 is a glycosylation site (N-linked (GlcNAc...) asparagine).

Belongs to the macoilin family.

It is found in the rough endoplasmic reticulum membrane. It localises to the nucleus membrane. Its function is as follows. Plays a role in the regulation of neuronal activity. The chain is Macoilin (MACO1) from Canis lupus familiaris (Dog).